The sequence spans 387 residues: Succinate--CoA ligase [ADP-forming] subunit beta (387 aa).

The ATP-grasp domain maps to Lys-9–Glu-244. ATP contacts are provided by residues Lys-46, Gly-53–Gly-55, Glu-99, Leu-102, and Glu-107. Residues Asn-199 and Asp-213 each coordinate Mg(2+). Residues Asn-264 and Gly-321–Met-323 each bind substrate.

The protein belongs to the succinate/malate CoA ligase beta subunit family. Heterotetramer of two alpha and two beta subunits. It depends on Mg(2+) as a cofactor.

It carries out the reaction succinate + ATP + CoA = succinyl-CoA + ADP + phosphate. It catalyses the reaction GTP + succinate + CoA = succinyl-CoA + GDP + phosphate. It participates in carbohydrate metabolism; tricarboxylic acid cycle; succinate from succinyl-CoA (ligase route): step 1/1. Functionally, succinyl-CoA synthetase functions in the citric acid cycle (TCA), coupling the hydrolysis of succinyl-CoA to the synthesis of either ATP or GTP and thus represents the only step of substrate-level phosphorylation in the TCA. The beta subunit provides nucleotide specificity of the enzyme and binds the substrate succinate, while the binding sites for coenzyme A and phosphate are found in the alpha subunit. This Methylobacillus flagellatus (strain ATCC 51484 / DSM 6875 / VKM B-1610 / KT) protein is Succinate--CoA ligase [ADP-forming] subunit beta.